Reading from the N-terminus, the 458-residue chain is Phosphoglucosamine mutase (458 aa).

Catalysis depends on Ser106, which acts as the Phosphoserine intermediate. Mg(2+)-binding residues include Ser106, Asp247, Asp249, and Asp251. Ser106 carries the post-translational modification Phosphoserine.

Belongs to the phosphohexose mutase family. Mg(2+) is required as a cofactor. Post-translationally, activated by phosphorylation.

It catalyses the reaction alpha-D-glucosamine 1-phosphate = D-glucosamine 6-phosphate. In terms of biological role, catalyzes the conversion of glucosamine-6-phosphate to glucosamine-1-phosphate. In Chlamydia pneumoniae (Chlamydophila pneumoniae), this protein is Phosphoglucosamine mutase.